The sequence spans 235 residues: Ubiquinone/menaquinone biosynthesis C-methyltransferase UbiE (235 aa).

3 residues coordinate S-adenosyl-L-methionine: Thr60, Asp81, and Ser126.

The protein belongs to the class I-like SAM-binding methyltransferase superfamily. MenG/UbiE family.

The enzyme catalyses a 2-demethylmenaquinol + S-adenosyl-L-methionine = a menaquinol + S-adenosyl-L-homocysteine + H(+). It catalyses the reaction a 2-methoxy-6-(all-trans-polyprenyl)benzene-1,4-diol + S-adenosyl-L-methionine = a 5-methoxy-2-methyl-3-(all-trans-polyprenyl)benzene-1,4-diol + S-adenosyl-L-homocysteine + H(+). It participates in quinol/quinone metabolism; menaquinone biosynthesis; menaquinol from 1,4-dihydroxy-2-naphthoate: step 2/2. The protein operates within cofactor biosynthesis; ubiquinone biosynthesis. Methyltransferase required for the conversion of demethylmenaquinol (DMKH2) to menaquinol (MKH2) and the conversion of 2-polyprenyl-6-methoxy-1,4-benzoquinol (DDMQH2) to 2-polyprenyl-3-methyl-6-methoxy-1,4-benzoquinol (DMQH2). This chain is Ubiquinone/menaquinone biosynthesis C-methyltransferase UbiE, found in Geobacter sp. (strain M21).